A 519-amino-acid chain; its full sequence is Cytochrome P450 CYP99A1 (519 aa).

Position 453 (cysteine 453) interacts with heme.

The protein belongs to the cytochrome P450 family. Heme serves as cofactor.

Its subcellular location is the membrane. This chain is Cytochrome P450 CYP99A1 (CYP99A1), found in Sorghum bicolor (Sorghum).